We begin with the raw amino-acid sequence, 299 residues long: 4-sulfomuconolactone hydrolase (299 aa).

Belongs to the metallo-dependent hydrolases superfamily. Sulfomuconolactone hydrolase family. As to quaternary structure, monomer. The cofactor is Zn(2+).

It carries out the reaction 4-sulfomuconolactone + H2O = maleylacetate + sulfite + 2 H(+). In terms of biological role, involved in the degradation of 4-sulfocatechol which is a central intermediate in the degradation of substituted sulfonated benzenes. Catalyzes the hydrolytical desulfonation of 4-sulfomuconolactone to yield maleylacetate. The sequence is that of 4-sulfomuconolactone hydrolase from Rhizobium radiobacter (Agrobacterium tumefaciens).